Consider the following 122-residue polypeptide: Large ribosomal subunit protein uL14c (122 aa).

The protein belongs to the universal ribosomal protein uL14 family. In terms of assembly, part of the 50S ribosomal subunit.

Its subcellular location is the plastid. The protein resides in the chloroplast. Its function is as follows. Binds to 23S rRNA. In Manihot esculenta (Cassava), this protein is Large ribosomal subunit protein uL14c.